The chain runs to 485 residues: Glutamyl-tRNA(Gln) amidotransferase subunit A (485 aa).

Catalysis depends on charge relay system residues K79 and S154. S178 acts as the Acyl-ester intermediate in catalysis.

The protein belongs to the amidase family. GatA subfamily. As to quaternary structure, heterotrimer of A, B and C subunits.

The enzyme catalyses L-glutamyl-tRNA(Gln) + L-glutamine + ATP + H2O = L-glutaminyl-tRNA(Gln) + L-glutamate + ADP + phosphate + H(+). In terms of biological role, allows the formation of correctly charged Gln-tRNA(Gln) through the transamidation of misacylated Glu-tRNA(Gln) in organisms which lack glutaminyl-tRNA synthetase. The reaction takes place in the presence of glutamine and ATP through an activated gamma-phospho-Glu-tRNA(Gln). The chain is Glutamyl-tRNA(Gln) amidotransferase subunit A from Carboxydothermus hydrogenoformans (strain ATCC BAA-161 / DSM 6008 / Z-2901).